The following is a 190-amino-acid chain: Hypoxanthine/guanine phosphoribosyltransferase (190 aa).

This sequence belongs to the purine/pyrimidine phosphoribosyltransferase family. Archaeal HPRT subfamily. As to quaternary structure, homodimer.

The protein resides in the cytoplasm. The enzyme catalyses IMP + diphosphate = hypoxanthine + 5-phospho-alpha-D-ribose 1-diphosphate. It carries out the reaction GMP + diphosphate = guanine + 5-phospho-alpha-D-ribose 1-diphosphate. The protein operates within purine metabolism; IMP biosynthesis via salvage pathway; IMP from hypoxanthine: step 1/1. Catalyzes a salvage reaction resulting in the formation of IMP that is energically less costly than de novo synthesis. In Methanothrix thermoacetophila (strain DSM 6194 / JCM 14653 / NBRC 101360 / PT) (Methanosaeta thermophila), this protein is Hypoxanthine/guanine phosphoribosyltransferase.